The sequence spans 385 residues: Chorismate synthase (385 aa).

The NADP(+) site is built by Arg40 and Arg46. Residues 128 to 130, 248 to 249, Gly293, 308 to 312, and Arg334 contribute to the FMN site; these read RAS, QA, and KAIPS.

Belongs to the chorismate synthase family. In terms of assembly, homotetramer. It depends on FMNH2 as a cofactor.

The catalysed reaction is 5-O-(1-carboxyvinyl)-3-phosphoshikimate = chorismate + phosphate. It functions in the pathway metabolic intermediate biosynthesis; chorismate biosynthesis; chorismate from D-erythrose 4-phosphate and phosphoenolpyruvate: step 7/7. Functionally, catalyzes the anti-1,4-elimination of the C-3 phosphate and the C-6 proR hydrogen from 5-enolpyruvylshikimate-3-phosphate (EPSP) to yield chorismate, which is the branch point compound that serves as the starting substrate for the three terminal pathways of aromatic amino acid biosynthesis. This reaction introduces a second double bond into the aromatic ring system. The protein is Chorismate synthase of Endomicrobium trichonymphae.